Reading from the N-terminus, the 544-residue chain is GMP synthase [glutamine-hydrolyzing] (544 aa).

Residues 12–210 (TILILDFGSQ…VKNVCSVRDG (199 aa)) enclose the Glutamine amidotransferase type-1 domain. The active-site Nucleophile is the C88. Catalysis depends on residues H184 and E186. One can recognise a GMPS ATP-PPase domain in the interval 211–419 (WSMESFIPKE…LNIPEHLVGR (209 aa)). Residue 239-245 (SGGVDST) participates in ATP binding. R312, D481, K536, and E542 together coordinate XMP.

Homodimer. Also forms a small population of homotetramers. The cofactor is Mg(2+).

The protein localises to the cytoplasm. Its subcellular location is the cytosol. The catalysed reaction is XMP + L-glutamine + ATP + H2O = GMP + L-glutamate + AMP + diphosphate + 2 H(+). Its pathway is purine metabolism; GMP biosynthesis; GMP from XMP (L-Gln route): step 1/1. In terms of biological role, catalyzes the conversion of xanthine monophosphate (XMP) to GMP in the presence of glutamine and ATP through an adenyl-XMP intermediate. The protein is GMP synthase [glutamine-hydrolyzing] of Cryptococcus neoformans var. neoformans serotype D (strain JEC21 / ATCC MYA-565) (Filobasidiella neoformans).